The sequence spans 490 residues: Transcriptional activator/repressor MOT3 (490 aa).

Met1 is modified (N-acetylmethionine). 3 disordered regions span residues 1–69 (MNAD…NKDD), 101–162 (NNNN…HPNQ), and 214–267 (NNGN…PQHH). The span at 8 to 36 (QQQQQQRQQHQQQQHQQQQHQHQHQQQQH) shows a compositional bias: low complexity. A compositionally biased stretch (polar residues) spans 37-65 (TILQNVSNTNNIGSDSLASQPFNTTTVSS). A prion domain (PrD) region spans residues 98 to 295 (NNSNNNNVTA…NLNLNINPAQ (198 aa)). 4 stretches are compositionally biased toward low complexity: residues 119–128 (NNSNNSNNSN), 138–157 (NNSTSNNNNNNNNNNNNNNN), 214–232 (NNGNNAANNGSNNSSHSAP), and 248–264 (THNNLNNGGAVNTNNAP). 2 consecutive C2H2-type zinc fingers follow at residues 346–368 (HQCQFCEKSFKRKSWLKRHLLSH) and 374–397 (FLCPWCLSRQKRKDNLLQHMKLKH). Over residues 421–436 (NNNNDNNNNNNSNSAS) the composition is skewed to low complexity. The interval 421-458 (NNNNDNNNNNNSNSASGSGGAGAAAAAATAPENEDGNG) is disordered.

It localises to the nucleus. Functionally, transcription factor that affects the expression of a large set of genes. Recognizes and binds to the consensus sequence 5'-[CAT]AGG[TC]A-3' in the promoter region. Plays a major role in the repression of a specific subset of hypoxic genes (e.g. ANB1, DAN1 and HEM13) under aerobic conditions. Acts synergistically with the transcription factor ROX1 to recruit the general repression complex SSN6-TUP1 to the promoter of hypoxic genes. Represses transcription of ergosterol biosynthetic genes. Negatively regulates pheromone-induced gene expression. Can act as a transcriptional activator (e.g. of genes like CYC1, SUC2 and the Ty long terminal repeat delta promoter). The chain is Transcriptional activator/repressor MOT3 (MOT3) from Saccharomyces cerevisiae (strain ATCC 204508 / S288c) (Baker's yeast).